The chain runs to 335 residues: Erlin-2 (335 aa).

The Cytoplasmic portion of the chain corresponds to 1–2 (MS). Residues 3–23 (HAGAIAAIGVALIAAALFSAI) form a helical membrane-spanning segment. The Lumenal portion of the chain corresponds to 24–335 (HKIEEGHVGV…ALNEPAVGDE (312 aa)). N-linked (GlcNAc...) asparagine glycosylation occurs at Asn106. The span at 310 to 321 (AGPSVQSATLLQ) shows a compositional bias: polar residues. The segment at 310–335 (AGPSVQSATLLQDDSPALNEPAVGDE) is disordered.

It belongs to the band 7/mec-2 family.

The protein resides in the endoplasmic reticulum membrane. Mediates the endoplasmic reticulum-associated degradation (ERAD) of inositol 1,4,5-trisphosphate receptors (IP3Rs). Promotes sterol-accelerated ERAD of HMGCR. Involved in regulation of cellular cholesterol homeostasis by regulation the SREBP signaling pathway. The polypeptide is Erlin-2 (erlin2) (Xenopus tropicalis (Western clawed frog)).